The chain runs to 420 residues: Pyrophosphate--fructose 6-phosphate 1-phosphotransferase (420 aa).

Gly13 lines the diphosphate pocket. Substrate contacts are provided by residues 142 to 144, 190 to 192, Glu247, and 297 to 300; these read TVD, MGR, and YLQR. Residue Asp144 is the Proton acceptor of the active site.

This sequence belongs to the phosphofructokinase type A (PFKA) family. PPi-dependent PFK group II subfamily. Clade 'B2' sub-subfamily. As to quaternary structure, homodimer. The cofactor is Mg(2+). It depends on Co(2+) as a cofactor. Mn(2+) serves as cofactor.

The protein localises to the cytoplasm. It carries out the reaction beta-D-fructose 6-phosphate + diphosphate = beta-D-fructose 1,6-bisphosphate + phosphate + H(+). The protein operates within carbohydrate degradation; glycolysis; D-glyceraldehyde 3-phosphate and glycerone phosphate from D-glucose: step 3/4. Non-allosteric. Its function is as follows. Catalyzes the phosphorylation of D-fructose 6-phosphate, the first committing step of glycolysis. Uses inorganic phosphate (PPi) as phosphoryl donor instead of ATP like common ATP-dependent phosphofructokinases (ATP-PFKs), which renders the reaction reversible, and can thus function both in glycolysis and gluconeogenesis. Consistently, PPi-PFK can replace the enzymes of both the forward (ATP-PFK) and reverse (fructose-bisphosphatase (FBPase)) reactions. This is Pyrophosphate--fructose 6-phosphate 1-phosphotransferase from Methylococcus capsulatus (strain ATCC 33009 / NCIMB 11132 / Bath).